The following is a 122-amino-acid chain: MKQLGKHIILELWGCENQALDDQPGIEKMLVDAVKACGATLICVKTHKFSPQGVTGVAVLSESHISIHTWPELRYAAMDVFTCGEHVTPHDTIPEIQKFLKPEKIDVMDIKRGIIEVDEVKE.

The active-site Schiff-base intermediate with substrate; via pyruvic acid is the Ser63. Position 63 is a pyruvic acid (Ser); by autocatalysis (Ser63). Residue His68 is the Proton acceptor; for processing activity of the active site. The Proton donor; for catalytic activity role is filled by Cys83.

It belongs to the prokaryotic AdoMetDC family. Type 1 subfamily. Heterotetramer of two alpha and two beta chains arranged as a dimer of alpha/beta heterodimers. Pyruvate serves as cofactor. In terms of processing, is synthesized initially as an inactive proenzyme. Formation of the active enzyme involves a self-maturation process in which the active site pyruvoyl group is generated from an internal serine residue via an autocatalytic post-translational modification. Two non-identical subunits are generated from the proenzyme in this reaction, and the pyruvate is formed at the N-terminus of the alpha chain, which is derived from the carboxyl end of the proenzyme. The post-translation cleavage follows an unusual pathway, termed non-hydrolytic serinolysis, in which the side chain hydroxyl group of the serine supplies its oxygen atom to form the C-terminus of the beta chain, while the remainder of the serine residue undergoes an oxidative deamination to produce ammonia and the pyruvoyl group blocking the N-terminus of the alpha chain.

The catalysed reaction is S-adenosyl-L-methionine + H(+) = S-adenosyl 3-(methylsulfanyl)propylamine + CO2. The protein operates within amine and polyamine biosynthesis; S-adenosylmethioninamine biosynthesis; S-adenosylmethioninamine from S-adenosyl-L-methionine: step 1/1. Catalyzes the decarboxylation of S-adenosylmethionine to S-adenosylmethioninamine (dcAdoMet), the propylamine donor required for the synthesis of the polyamines spermine and spermidine from the diamine putrescine. This is S-adenosylmethionine decarboxylase proenzyme from Methanococcus maripaludis (strain C5 / ATCC BAA-1333).